A 247-amino-acid chain; its full sequence is Chaperone protein NfaE (247 aa).

Positions 1–29 (MKMRAVAVFTGMLTGVLSVTGLLSAGAYA) are cleaved as a signal peptide. The segment at 106–125 (GQQSSRRRSVSTGGEFPSDR) is disordered.

The protein belongs to the periplasmic pilus chaperone family.

The protein localises to the periplasm. Its function is as follows. Involved in the biogenesis of the NFA-I adhesin. This Escherichia coli protein is Chaperone protein NfaE (nfaE).